The chain runs to 164 residues: Large ribosomal subunit protein uL10 (164 aa).

This sequence belongs to the universal ribosomal protein uL10 family. As to quaternary structure, part of the ribosomal stalk of the 50S ribosomal subunit. The N-terminus interacts with L11 and the large rRNA to form the base of the stalk. The C-terminus forms an elongated spine to which L12 dimers bind in a sequential fashion forming a multimeric L10(L12)X complex.

Its function is as follows. Forms part of the ribosomal stalk, playing a central role in the interaction of the ribosome with GTP-bound translation factors. The sequence is that of Large ribosomal subunit protein uL10 (rplJ) from Helicobacter pylori (strain J99 / ATCC 700824) (Campylobacter pylori J99).